The chain runs to 706 residues: Frizzled-6 (706 aa).

Positions 1 to 18 (MEMFTFLLTCIFLPLLRG) are cleaved as a signal peptide. The FZ domain maps to 19-132 (HSLFTCEPIT…CDRLQYCDET (114 aa)). Residues 19 to 201 (HSLFTCEPIT…SDELEFAKSF (183 aa)) lie on the Extracellular side of the membrane. Intrachain disulfides connect C24/C85, C32/C78, C69/C106, C95/C129, and C99/C123. N38 carries an N-linked (GlcNAc...) asparagine glycan. Residues 202 to 222 (IGTVSIFCLCATLFTFLTFLI) form a helical membrane-spanning segment. The Cytoplasmic segment spans residues 223-233 (DVRRFRYPERP). The chain crosses the membrane as a helical span at residues 234–254 (IIYYSVCYSIVSLMYFIGFLL). At 255 to 284 (GDSTACNKADEKLELGDTVVLGSQNKACTV) the chain is on the extracellular side. The helical transmembrane segment at 285–305 (LFMLLYFFTMAGTVWWVILTI) threads the bilayer. At 306–324 (TWFLAAGRKWSCEAIEQKA) the chain is on the cytoplasmic side. The chain crosses the membrane as a helical span at residues 325–345 (VWFHAVAWGTPGFLTVMLLAM). Residues 346-370 (NKVEGDNISGVCFVGLYDLDASRYF) lie on the Extracellular side of the membrane. N-linked (GlcNAc...) asparagine glycosylation is present at N352. A helical transmembrane segment spans residues 371–391 (VLLPLCLCVFVGLSLLLAGII). Topologically, residues 392-416 (SLNHVRQVIQHDGRNQEKLKKFMIR) are cytoplasmic. Residues 417 to 437 (IGVFSGLYLVPLVTLLGCYVY) traverse the membrane as a helical segment. The Extracellular portion of the chain corresponds to 438-473 (EQVNRITWEITWVSDHCRQYHIPCPYQAKAKARPEL). A helical transmembrane segment spans residues 474–494 (ALFMIKYLMTLIVGISAVFWV). Residues 495–706 (GSKKTCTEWA…EQGGGCHSDT (212 aa)) lie on the Cytoplasmic side of the membrane. The Lys-Thr-X-X-X-Trp motif, mediates interaction with the PDZ domain of Dvl family members signature appears at 498 to 503 (KTCTEW). Positions 588-706 (EIQTSPETSM…EQGGGCHSDT (119 aa)) are disordered. Residues 646–658 (ARSEGRISPKSDI) are compositionally biased toward basic and acidic residues. S653 is modified (phosphoserine). A compositionally biased stretch (polar residues) spans 662 to 672 (GLAQSNNLQVP). A compositionally biased stretch (low complexity) spans 673 to 685 (SSSEPSSLKGSTS). Residues 694–706 (VRKEQGGGCHSDT) are compositionally biased toward basic and acidic residues.

It belongs to the G-protein coupled receptor Fz/Smo family. In terms of assembly, interacts with LMBR1L. In terms of processing, ubiquitinated by ZNRF3, leading to its degradation by the proteasome. As to expression, detected in adult heart, brain, placenta, lung, liver, skeletal muscle, kidney, pancreas, thymus, prostate, testis, ovary, small intestine and colon. In the fetus, expressed in brain, lung, liver and kidney.

It localises to the membrane. The protein localises to the cell membrane. It is found in the cell surface. The protein resides in the apical cell membrane. Its subcellular location is the cytoplasmic vesicle membrane. It localises to the endoplasmic reticulum membrane. Receptor for Wnt proteins. Most of frizzled receptors are coupled to the beta-catenin canonical signaling pathway, which leads to the activation of disheveled proteins, inhibition of GSK-3 kinase, nuclear accumulation of beta-catenin and activation of Wnt target genes. A second signaling pathway involving PKC and calcium fluxes has been seen for some family members, but it is not yet clear if it represents a distinct pathway or if it can be integrated in the canonical pathway, as PKC seems to be required for Wnt-mediated inactivation of GSK-3 kinase. Both pathways seem to involve interactions with G-proteins. May be involved in transduction and intercellular transmission of polarity information during tissue morphogenesis and/or in differentiated tissues. Together with FZD3, is involved in the neural tube closure and plays a role in the regulation of the establishment of planar cell polarity (PCP), particularly in the orientation of asymmetric bundles of stereocilia on the apical faces of a subset of auditory and vestibular sensory cells located in the inner ear. The polypeptide is Frizzled-6 (FZD6) (Homo sapiens (Human)).